The chain runs to 135 residues: Beta-galactoside-binding lectin (135 aa).

An N-acetylserine modification is found at S2. A disulfide bridge connects residues C3 and C8. Residues G5–E135 form the Galectin domain. Residues H46 to R50, H54, N63, W70 to E73, and W70 to E76 contribute to the a beta-D-galactoside site.

Homodimer; disulfide-linked. As to quaternary structure, (Microbial infection) Interacts with newcastle disease virus protein HN; this interaction inhibits viral adsorption rather than internalization. Mainly in the intestine (adult), mainly in the skin (embryo).

Its function is as follows. This protein binds beta-galactoside. May participate in host antiviral defense through specific interaction with glycans on the viral envelope glycoproteins. In Gallus gallus (Chicken), this protein is Beta-galactoside-binding lectin (CG-1B).